A 143-amino-acid polypeptide reads, in one-letter code: Putative pre-16S rRNA nuclease (143 aa).

The protein belongs to the YqgF nuclease family.

The protein localises to the cytoplasm. Functionally, could be a nuclease involved in processing of the 5'-end of pre-16S rRNA. The sequence is that of Putative pre-16S rRNA nuclease from Salinibacter ruber (strain DSM 13855 / M31).